The sequence spans 244 residues: 14-3-3 protein beta/alpha-B (244 aa).

At methionine 1 the chain carries N-acetylmethionine.

Belongs to the 14-3-3 family. As to quaternary structure, homodimer, and heterodimer with other family members.

The protein resides in the cytoplasm. Adapter protein implicated in the regulation of a large spectrum of both general and specialized signaling pathways. Binds to a large number of partners, usually by recognition of a phosphoserine or phosphothreonine motif. Binding generally results in the modulation of the activity of the binding partner. This Xenopus laevis (African clawed frog) protein is 14-3-3 protein beta/alpha-B (ywhab-b).